A 222-amino-acid polypeptide reads, in one-letter code: Putative ankyrin repeat protein L36 (222 aa).

ANK repeat units lie at residues 1-14 (MVKYLVAQGVNVDA), 15-44 (QNSRALCLACKYGYINIAYFLMHEGANIYA), 45-74 (NDNHPIRLAAEYGHLSIVKLLIYHNANIRA), 76-104 (EDSALRMAAKRNKLEVVKYIIEKIGTNYE), 105-134 (YSDYPLAYAAGKGHIEMIEYLLSIGEKITD), 136-161 (AMFMAINNGHVGTVKYLIDESQSLPC), and 163-191 (SYSELAKITRKGHLEMIKLLNNRGIKINK).

The chain is Putative ankyrin repeat protein L36 from Acanthamoeba polyphaga (Amoeba).